Here is a 352-residue protein sequence, read N- to C-terminus: 4-hydroxy-3-methylbut-2-en-1-yl diphosphate synthase (flavodoxin) (352 aa).

Cysteine 262, cysteine 265, cysteine 297, and glutamate 304 together coordinate [4Fe-4S] cluster.

The protein belongs to the IspG family. [4Fe-4S] cluster is required as a cofactor.

The enzyme catalyses (2E)-4-hydroxy-3-methylbut-2-enyl diphosphate + oxidized [flavodoxin] + H2O + 2 H(+) = 2-C-methyl-D-erythritol 2,4-cyclic diphosphate + reduced [flavodoxin]. Its pathway is isoprenoid biosynthesis; isopentenyl diphosphate biosynthesis via DXP pathway; isopentenyl diphosphate from 1-deoxy-D-xylulose 5-phosphate: step 5/6. Its function is as follows. Converts 2C-methyl-D-erythritol 2,4-cyclodiphosphate (ME-2,4cPP) into 1-hydroxy-2-methyl-2-(E)-butenyl 4-diphosphate. The sequence is that of 4-hydroxy-3-methylbut-2-en-1-yl diphosphate synthase (flavodoxin) from Campylobacter concisus (strain 13826).